Here is a 331-residue protein sequence, read N- to C-terminus: Pantothenate kinase (331 aa).

ATP is bound at residue 109 to 116 (GSVAVGKS).

The protein belongs to the prokaryotic pantothenate kinase family.

The protein resides in the cytoplasm. It catalyses the reaction (R)-pantothenate + ATP = (R)-4'-phosphopantothenate + ADP + H(+). It functions in the pathway cofactor biosynthesis; coenzyme A biosynthesis; CoA from (R)-pantothenate: step 1/5. This is Pantothenate kinase from Rhizobium johnstonii (strain DSM 114642 / LMG 32736 / 3841) (Rhizobium leguminosarum bv. viciae).